Consider the following 347-residue polypeptide: NADH-ubiquinone oxidoreductase chain 2 (347 aa).

10 consecutive transmembrane segments (helical) span residues 1–21 (MTPMTTLIMLFSLLLGTTLTL), 26–46 (WLLMWMGLEVSTLAIIPLLTY), 56–76 (AIKYFLTQATASMLLMFAASL), 96–116 (GIMTFALAMKLGLAPFHYWVP), 153–171 (ILLTLAISSTLLGGWNGLN), 178–198 (VMAYSSIAHMGWMVLIIIYFP), 199–219 (TLTTLNLTLYIMSTVALFTVF), 237–257 (APIMTLAIILLLLSLGGLPPL), 277–297 (IMATVLAITALLNLFFYMRII), and 326–346 (LPTLVILSTTLLPLTPMFITL).

The protein belongs to the complex I subunit 2 family. In terms of assembly, core subunit of respiratory chain NADH dehydrogenase (Complex I) which is composed of 45 different subunits. Interacts with TMEM242.

It is found in the mitochondrion inner membrane. It carries out the reaction a ubiquinone + NADH + 5 H(+)(in) = a ubiquinol + NAD(+) + 4 H(+)(out). Its function is as follows. Core subunit of the mitochondrial membrane respiratory chain NADH dehydrogenase (Complex I) which catalyzes electron transfer from NADH through the respiratory chain, using ubiquinone as an electron acceptor. Essential for the catalytic activity and assembly of complex I. In Ornithorhynchus anatinus (Duckbill platypus), this protein is NADH-ubiquinone oxidoreductase chain 2.